Consider the following 353-residue polypeptide: GTPase Obg (353 aa).

Residues 1-159 (MKFLDEAKVY…RWIWLRLKLI (159 aa)) form the Obg domain. The region spanning 160 to 327 (ADAGLVGLPN…ALRALAAVIG (168 aa)) is the OBG-type G domain. GTP contacts are provided by residues 166–173 (GLPNAGKS), 191–195 (FTTLH), 212–215 (DIPG), 279–282 (NKID), and 308–310 (SGV). Mg(2+)-binding residues include Ser-173 and Thr-193.

The protein belongs to the TRAFAC class OBG-HflX-like GTPase superfamily. OBG GTPase family. As to quaternary structure, monomer. Requires Mg(2+) as cofactor.

It is found in the cytoplasm. An essential GTPase which binds GTP, GDP and possibly (p)ppGpp with moderate affinity, with high nucleotide exchange rates and a fairly low GTP hydrolysis rate. Plays a role in control of the cell cycle, stress response, ribosome biogenesis and in those bacteria that undergo differentiation, in morphogenesis control. The sequence is that of GTPase Obg from Rhodopseudomonas palustris (strain BisB5).